We begin with the raw amino-acid sequence, 619 residues long: Dynein axonemal intermediate chain 2 (619 aa).

WD repeat units lie at residues 214–254 (KPSS…LVAE), 261–302 (SHRD…EPTE), 362–401 (GHHGPIYALQRNPFYPKNFLTVGDWAARIWSEESRESSIM), 405–445 (YHMA…CDPA), and 450–489 (VCDDPLFCLRVQDTGCLIACGSELGTTTLLEVSSSLSTLQ). The tract at residues 566–619 (EALKKKPKPKKASIEVEGEDELEDIAGEEEESGIIMGEDTGEDDMDEKNEGGAP) is disordered. Acidic residues predominate over residues 581-597 (VEGEDELEDIAGEEEES).

The protein belongs to the dynein intermediate chain family. As to quaternary structure, consists of at least two heavy chains and a number of intermediate and light chains. Interacts with DNAAF2. Interacts with DNAAF6/PIH1D3. Interacts with HEATR2; probably involved in outer arm dynein assembly. Interacts with CFAP53.

It is found in the cytoplasm. Its subcellular location is the cytoskeleton. The protein localises to the cilium axoneme. The protein resides in the dynein axonemal particle. In terms of biological role, part of the dynein complex of respiratory cilia. This chain is Dynein axonemal intermediate chain 2 (Dnai2), found in Rattus norvegicus (Rat).